The sequence spans 143 residues: Antiholin-like protein LrgA (143 aa).

4 helical membrane passes run 6 to 26 (VYSFLSQAFIFSAIMLISNII), 30 to 50 (LPIPMPSSVIGLVILFSLLCL), 61 to 81 (LGTALTGIIGFLFVPSGISVI), and 97 to 117 (VIVVATVILLAVTGLFAQFIL).

This sequence belongs to the CidA/LrgA family. LrgA subfamily.

It is found in the cell membrane. Inhibits the expression or activity of extracellular murein hydrolases by interacting, possibly with LrgB, with the holin-like protein CidA. The LrgAB and CidA proteins may affect the proton motive force of the membrane. May be involved in programmed cell death (PCD), possibly triggering PCD in response to antibiotics and environmental stresses. The polypeptide is Antiholin-like protein LrgA (Bacillus cereus (strain AH187)).